The sequence spans 424 residues: MSLDHHQFHQANSRNSKPYISYGIPFWRACAHHAKALNSHRIYIVASRSLSRSQALEDLKNALGLIHIVGEYNGIAQHTPWEQVFGLLRDLRQTQADLIITLGGGSVTDGVKLARLLAANNVTTLEQADSLLSHCEPGKPKPSDETVQPASIPVINVPTTLSGAEFTRAAGATNTQSDHKKRIIIHQSMYADIVVLDPELSLGTPARFWFSTGIRAVDHFVEGIYGNMATTMVQGDNSGSDQLIIEKDIQASLGALLVALLHTKDDWQNCDARLRQMLALKDCPRAGHNGVGASHGIGHQLGPFGVGHGETSCIILPCVLKYNWSHGDARLRAKLQLITDVFWGNAVLTKLLVDRGLHPQDTDPGDVIAAYISALGMPNSLAKYGIHEAQFHQIAENAMEDVCTQVNPVELDKNKVVEILYMAA.

The protein belongs to the iron-containing alcohol dehydrogenase family. Requires Fe cation as cofactor.

It participates in mycotoxin biosynthesis. In terms of biological role, dehydrogenase; part of the gene cluster that mediates the biosynthesis of fumonisins B1 (FB1), B2 (FB2), B3 (FB3), and B4 (FB4), which are carcinogenic mycotoxins. Within the pathway, FUM7 is involved the addition of the tricarballylic moieties to the carbon backbone. FUM7 dehydrogenase removes the C-3 hydroxyl of citrate to form tricarballylic acid either before or after the CoA activation by the FUM10 acyl-CoA synthetase and FUM14 catalyzed esterification of CoA-activated tricarballylic acid to the C-14 and C-15 hydroxyls of the fumonisin backbone. The biosynthesis starts with the FUM1-catalyzed carbon chain assembly from one molecule of acetyl-CoA, eight molecules of malonyl-CoA, and two molecules of methionine (in S-adenosyl form). The C18 polyketide chain is released from the enzyme by a nucleophilic attack of a carbanion, which is derived from R-carbon of alanine by decarboxylation, on the carbonyl carbon of polyketide acyl chain. This step is catalyzed by the pyridoxal 5'-phosphate-dependent aminoacyl transferase FUM8. The resultant 3-keto intermediate is then stereospecifically reduced to a 3-hydroxyl product by reductase FUM13. Subsequent oxidations at C-10 by the cytochrome P450 monooxygenase FUM2, C-14 and C-15 by FUM6, FUM12 or FUM15, tricarballylic esterification of the hydroxyl groups on C-14 and C-15 by acyltransferase FUM14, and C-5 hydroxylation by 2-keto-glutarate-dependent dioxygenase FUM3 furnish the biosynthesis of fumonisins. The tricarballylic moieties are most likely derived from the citric acid cycle, and their addition to the carbon backbone may involve FUM7, FUM10, FUM11 and FUM14. The polypeptide is Dehydrogenase FUM7 (Gibberella moniliformis (strain M3125 / FGSC 7600) (Maize ear and stalk rot fungus)).